The chain runs to 342 residues: Isopentenyl-diphosphate delta-isomerase (342 aa).

Position 11–12 (11–12) interacts with substrate; it reads RK. FMN-binding positions include Ser-68, 69–71, Ser-99, and Asn-128; that span reads SMT. 99–101 serves as a coordination point for substrate; sequence SQR. Gln-162 lines the substrate pocket. Glu-163 is a binding site for Mg(2+). Residues Lys-194, Ser-219, Thr-224, 275–277, and 296–297 contribute to the FMN site; these read GVR and AK.

Belongs to the IPP isomerase type 2 family. Homooctamer. Dimer of tetramers. FMN is required as a cofactor. The cofactor is NADPH. Mg(2+) serves as cofactor.

Its subcellular location is the cytoplasm. The enzyme catalyses isopentenyl diphosphate = dimethylallyl diphosphate. Involved in the biosynthesis of isoprenoids. Catalyzes the 1,3-allylic rearrangement of the homoallylic substrate isopentenyl (IPP) to its allylic isomer, dimethylallyl diphosphate (DMAPP). The protein is Isopentenyl-diphosphate delta-isomerase of Legionella pneumophila (strain Paris).